The chain runs to 259 residues: Phosphatidate cytidylyltransferase (259 aa).

7 consecutive transmembrane segments (helical) span residues 31–51 (LVIF…CFAI), 69–89 (PLVL…IGLL), 103–123 (FFKS…LIKI), 129–149 (YYLL…YYIG), 170–190 (FLGG…YGIL), 193–213 (FLLG…KSFI), and 236–256 (FDAL…GELN).

This sequence belongs to the CDS family.

The protein resides in the cell membrane. The enzyme catalyses a 1,2-diacyl-sn-glycero-3-phosphate + CTP + H(+) = a CDP-1,2-diacyl-sn-glycerol + diphosphate. The protein operates within phospholipid metabolism; CDP-diacylglycerol biosynthesis; CDP-diacylglycerol from sn-glycerol 3-phosphate: step 3/3. The chain is Phosphatidate cytidylyltransferase (cdsA) from Aquifex aeolicus (strain VF5).